Consider the following 97-residue polypeptide: Putative defensin-like protein 240 (97 aa).

The N-terminal stretch at 1-23 is a signal peptide; it reads MRYTTSFIVFCFYIFLFTNLVQG. 4 disulfides stabilise this stretch: Cys29-Cys88, Cys39-Cys69, Cys47-Cys85, and Cys67-Cys87.

Belongs to the DEFL family.

The protein localises to the secreted. The protein is Putative defensin-like protein 240 (SCRL18) of Arabidopsis thaliana (Mouse-ear cress).